The following is a 742-amino-acid chain: Photosystem I P700 chlorophyll a apoprotein A2 (742 aa).

8 helical membrane-spanning segments follow: residues Leu46–Ala69, Leu135–Gln158, Leu175–Ile199, Ile273–Tyr291, Leu336–Gly359, Ser375–Val401, Ala423–His445, and Phe525–Ile543. [4Fe-4S] cluster contacts are provided by Cys567 and Cys576. 2 consecutive transmembrane segments (helical) span residues Ala583–Trp604 and Leu651–Ile673. Divinyl chlorophyll a contacts are provided by His662, Met670, and Tyr678. Trp679 serves as a coordination point for phylloquinone. A helical transmembrane segment spans residues Leu715–Ala735.

This sequence belongs to the PsaA/PsaB family. As to quaternary structure, the PsaA/B heterodimer binds the P700 divinyl chlorophyll special pair and subsequent electron acceptors. PSI consists of a core antenna complex that captures photons, and an electron transfer chain that converts photonic excitation into a charge separation. The cyanobacterial PSI reaction center is composed of one copy each of PsaA,B,C,D,E,F,I,J,K,L,M and X, and forms trimeric complexes. PSI electron transfer chain: 5 divinyl chlorophyll a, 1 divinyl chlorophyll a', 2 phylloquinones and 3 4Fe-4S clusters. PSI core antenna: 90 divinyl chlorophyll a, 22 carotenoids, 3 phospholipids and 1 galactolipid. P700 is a divinyl chlorophyll a/divinyl chlorophyll a' dimer, A0 is one or more divinyl chlorophyll a, A1 is one or both phylloquinones and FX is a shared 4Fe-4S iron-sulfur center. is required as a cofactor.

Its subcellular location is the cellular thylakoid membrane. The enzyme catalyses reduced [plastocyanin] + hnu + oxidized [2Fe-2S]-[ferredoxin] = oxidized [plastocyanin] + reduced [2Fe-2S]-[ferredoxin]. Functionally, psaA and PsaB bind P700, the primary electron donor of photosystem I (PSI), as well as the electron acceptors A0, A1 and FX. PSI is a plastocyanin/cytochrome c6-ferredoxin oxidoreductase, converting photonic excitation into a charge separation, which transfers an electron from the donor P700 chlorophyll pair to the spectroscopically characterized acceptors A0, A1, FX, FA and FB in turn. Oxidized P700 is reduced on the lumenal side of the thylakoid membrane by plastocyanin or cytochrome c6. In Prochlorococcus marinus (strain NATL2A), this protein is Photosystem I P700 chlorophyll a apoprotein A2.